The following is a 441-amino-acid chain: Fibroleukin (441 aa).

The signal sequence occupies residues 1–15 (MKLANWCWLSSTVLA). N25 carries N-linked (GlcNAc...) asparagine glycosylation. The stretch at 73-167 (SRIEEVFKEV…LEKLNLVNMN (95 aa)) forms a coiled coil. Positions 102 to 128 (QADDSRDPGRNGLLLPGTGAPGETGDN) are disordered. N179, N237, N265, and N338 each carry an N-linked (GlcNAc...) asparagine glycan. A Fibrinogen C-terminal domain is found at 206 to 438 (VQQHLIYKDC…EVKMMIRPKH (233 aa)).

In terms of assembly, homotetramer; disulfide-linked.

Its subcellular location is the secreted. In terms of biological role, may play a role in physiologic lymphocyte functions at mucosal sites. The polypeptide is Fibroleukin (FGL2) (Bos taurus (Bovine)).